The chain runs to 289 residues: ATP synthase subunit a (289 aa).

The next 7 membrane-spanning stretches (helical) occupy residues K41–F61, Y101–A121, I129–K149, T166–V186, F189–F209, F222–I242, and A244–H264.

This sequence belongs to the ATPase A chain family. In terms of assembly, F-type ATPases have 2 components, CF(1) - the catalytic core - and CF(0) - the membrane proton channel. CF(1) has five subunits: alpha(3), beta(3), gamma(1), delta(1), epsilon(1). CF(0) has three main subunits: a(1), b(2) and c(9-12). The alpha and beta chains form an alternating ring which encloses part of the gamma chain. CF(1) is attached to CF(0) by a central stalk formed by the gamma and epsilon chains, while a peripheral stalk is formed by the delta and b chains.

It localises to the cell membrane. Functionally, key component of the proton channel; it plays a direct role in the translocation of protons across the membrane. This is ATP synthase subunit a from Frankia alni (strain DSM 45986 / CECT 9034 / ACN14a).